The sequence spans 185 residues: Pre-histone-like nucleoprotein (185 aa).

An N-acetylserine; by host modification is found at Ser-2. Residues 2-23 (SILISPDNNTGWGLCSAGMYGG) constitute a propeptide that is removed on maturation. Residue Thr-55 is modified to Phosphothreonine; by host. At Ser-172 the chain carries Phosphoserine; by host. The Nuclear localization signal motif lies at 175–185 (RVPVRSRPPRS).

This sequence belongs to the adenoviridae histone-like nucleoprotein family. Interacts with the core-capsid bridging protein; this interaction bridges the virus core to the capsid. Interacts with host NPM1; this interaction might play a role in placing the pre-histone-like nucleoprotein on the viral DNA or regulating viral gene expression. Interacts with host HMGB1; this interaction inhibits host immune response. In terms of processing, cleaved near the N-terminus by the viral protease during virion maturation to form the mature protein.

The protein resides in the virion. It is found in the host nucleus. Its subcellular location is the host nucleolus. Its function is as follows. Plays a role in the inhibition of host immune response within the nucleus. Interacts with cellular nucleosomes and immobilizes the host immune danger signal HMGB1 on chromatin. In turn, prevents HMGB1 release out of the cell and thus decreases inflammation. Also plays a role in the wrapping and condensation of the viral DNA. May also promote viral genome import into the nucleus. The chain is Pre-histone-like nucleoprotein from Human adenovirus F serotype 40 (HAdV-40).